The chain runs to 323 residues: DNA-directed RNA polymerase subunit alpha (323 aa).

Residues 1 to 225 (MLDIAMPKIE…QYSQTIADFN (225 aa)) form an alpha N-terminal domain (alpha-NTD) region. The interval 246–323 (IYDTPIEELD…SHAARAEIEG (78 aa)) is alpha C-terminal domain (alpha-CTD).

This sequence belongs to the RNA polymerase alpha chain family. Homodimer. The RNAP catalytic core consists of 2 alpha, 1 beta, 1 beta' and 1 omega subunit. When a sigma factor is associated with the core the holoenzyme is formed, which can initiate transcription.

The catalysed reaction is RNA(n) + a ribonucleoside 5'-triphosphate = RNA(n+1) + diphosphate. In terms of biological role, DNA-dependent RNA polymerase catalyzes the transcription of DNA into RNA using the four ribonucleoside triphosphates as substrates. This Roseiflexus sp. (strain RS-1) protein is DNA-directed RNA polymerase subunit alpha.